The sequence spans 384 residues: MSAVNSEATTNLLAEFQKLRGETIGLHSIFSEKSTVDISNLNGNTTLKRIEDSCEELKNEIREHVQVSSDELKSIRTANSGFLNKIEESLKTSQQEAREDLKAIEKKNESLLNKSLNELKFQKEQLKYVEATLISQQKLIEHMAKELTGKSISDMVKNNEDDGTHFEFSHTFNSVATLEKGVERRSELKEGCGSLNWFMSIKRERPSRKLLVYLNLDCEKLPTNNWIIEADIQCTLNQYYFNEWVRKFERKEDAIFKCENGEYTDKLVFNFGEYEEILRTFTKNGVWNIEFDVDIIKTVGLSKKKLRCFDESAAEVSDAVMIVKDEKFHVSKMFLAAQSSNFKLLFKNSNNSEFTLDGINSEDFQCFLELLYGEPALTGRLLNN.

Residues 41–127 (LNGNTTLKRI…ELKFQKEQLK (87 aa)) are a coiled coil. Residues 167-277 (EFSHTFNSVA…VFNFGEYEEI (111 aa)) enclose the MATH domain. Positions 317 to 380 (SDAVMIVKDE…LYGEPALTGR (64 aa)) constitute a BTB domain.

The sequence is that of BTB and MATH domain-containing protein 34 (bath-34) from Caenorhabditis elegans.